The chain runs to 43 residues: Thaumatin-like protein 1 (43 aa).

This sequence belongs to the thaumatin family.

This is Thaumatin-like protein 1 from Glebionis coronaria (Crown daisy).